A 55-amino-acid chain; its full sequence is ATP synthase F(0) complex subunit 8 (55 aa).

A helical membrane pass occupies residues 4-24 (LNPAPWFMIFMFTWAIFLTIL). A disordered region spans residues 34–55 (PNEPSPQGMTTPKTAPWNWPWH).

This sequence belongs to the ATPase protein 8 family. In terms of assembly, component of the ATP synthase complex composed at least of ATP5F1A/subunit alpha, ATP5F1B/subunit beta, ATP5MC1/subunit c (homooctomer), MT-ATP6/subunit a, MT-ATP8/subunit 8, ATP5ME/subunit e, ATP5MF/subunit f, ATP5MG/subunit g, ATP5MK/subunit k, ATP5MJ/subunit j, ATP5F1C/subunit gamma, ATP5F1D/subunit delta, ATP5F1E/subunit epsilon, ATP5PF/subunit F6, ATP5PB/subunit b, ATP5PD/subunit d, ATP5PO/subunit OSCP. ATP synthase complex consists of a soluble F(1) head domain (subunits alpha(3) and beta(3)) - the catalytic core - and a membrane F(0) domain - the membrane proton channel (subunits c, a, 8, e, f, g, k and j). These two domains are linked by a central stalk (subunits gamma, delta, and epsilon) rotating inside the F1 region and a stationary peripheral stalk (subunits F6, b, d, and OSCP).

The protein resides in the mitochondrion membrane. Functionally, subunit 8, of the mitochondrial membrane ATP synthase complex (F(1)F(0) ATP synthase or Complex V) that produces ATP from ADP in the presence of a proton gradient across the membrane which is generated by electron transport complexes of the respiratory chain. ATP synthase complex consist of a soluble F(1) head domain - the catalytic core - and a membrane F(1) domain - the membrane proton channel. These two domains are linked by a central stalk rotating inside the F(1) region and a stationary peripheral stalk. During catalysis, ATP synthesis in the catalytic domain of F(1) is coupled via a rotary mechanism of the central stalk subunits to proton translocation. In vivo, can only synthesize ATP although its ATP hydrolase activity can be activated artificially in vitro. Part of the complex F(0) domain. The chain is ATP synthase F(0) complex subunit 8 from Gadus morhua (Atlantic cod).